Reading from the N-terminus, the 197-residue chain is MKKTTTLLGICAILSAPAFAAQLTLQKELVPRVINGEFVYPEWISDNNSIELKDGENQLAVTVGQIVFEDGKRRKFDSQPLLLEFDAEKDAELSLTYKTFRTIEEAKAFELDPKVVLKDKNGKEVDFSMVQLRKGGLQGFRDYEREVADYNNAVNKQATKSSIAQSPAVTKTLKESFNELSREEQQEFMQWAMRNLK.

A signal peptide spans 1–20 (MKKTTTLLGICAILSAPAFA).

Belongs to the UPF0319 family.

The polypeptide is UPF0319 protein VP0761 (Vibrio parahaemolyticus serotype O3:K6 (strain RIMD 2210633)).